The chain runs to 81 residues: Large ribosomal subunit protein uL23 (81 aa).

This sequence belongs to the universal ribosomal protein uL23 family. Part of the 50S ribosomal subunit. Contacts protein L29.

Binds to 23S rRNA. One of the proteins that surrounds the polypeptide exit tunnel on the outside of the ribosome. The polypeptide is Large ribosomal subunit protein uL23 (Saccharolobus solfataricus (strain ATCC 35092 / DSM 1617 / JCM 11322 / P2) (Sulfolobus solfataricus)).